Reading from the N-terminus, the 79-residue chain is D-alanyl carrier protein (79 aa).

The region spanning 1–77 (MDIKAEVIEI…KIVEGVTELR (77 aa)) is the Carrier domain. S35 is subject to O-(pantetheine 4'-phosphoryl)serine.

It belongs to the DltC family. Post-translationally, 4'-phosphopantetheine is transferred from CoA to a specific serine of apo-DCP.

The protein resides in the cytoplasm. It participates in cell wall biogenesis; lipoteichoic acid biosynthesis. Functionally, carrier protein involved in the D-alanylation of lipoteichoic acid (LTA). The loading of thioester-linked D-alanine onto DltC is catalyzed by D-alanine--D-alanyl carrier protein ligase DltA. The DltC-carried D-alanyl group is further transferred to cell membrane phosphatidylglycerol (PG) by forming an ester bond, probably catalyzed by DltD. D-alanylation of LTA plays an important role in modulating the properties of the cell wall in Gram-positive bacteria, influencing the net charge of the cell wall. The sequence is that of D-alanyl carrier protein from Streptococcus sanguinis (strain SK36).